The following is a 114-amino-acid chain: Transmembrane protein 14C (114 aa).

A run of 4 helical transmembrane segments spans residues 8-28 (LMPLHYFGFGYAALVATGGII), 33-53 (AGSVPSLAAGLFFGGLAGLGA), 63-83 (VWVFLATSGTLAGIMGMRFYN), and 89-109 (PAGLIAGASLLMVAKVGISLL).

It belongs to the TMEM14 family.

The protein localises to the mitochondrion membrane. In terms of biological role, required for normal heme biosynthesis. This Mus musculus (Mouse) protein is Transmembrane protein 14C (Tmem14c).